We begin with the raw amino-acid sequence, 603 residues long: Podocalyxin-like protein 2 (603 aa).

The first 28 residues, 1–28, serve as a signal peptide directing secretion; it reads MARPLRAARLPPPLLLLLAAGASLGAYA. Residues 29-499 are Extracellular-facing; it reads VGVDEPGPEG…ATQVRSDYGT (471 aa). Positions 53 to 92 are disordered; it reads FEPLDSEEPSEAMGLDAGLAPGSGFPSEDSEESRLLQPPQ. The O-linked (Xyl...) (chondroitin sulfate) serine glycan is linked to Ser75. At Tyr93 the chain carries Sulfotyrosine. N-linked (GlcNAc...) asparagine glycosylation occurs at Asn101. Sulfotyrosine is present on Tyr113. The tract at residues 124 to 368 is disordered; sequence SMEDPGQAPD…LEGQAAEAHS (245 aa). Positions 156–187 are enriched in acidic residues; sequence QEEEEEEEEEEEEREEEEREKEAEEEEEEEEL. The span at 196–216 shows a compositional bias: low complexity; sequence ATAQAHAPSPSTSSSTSSQSP. 3 stretches are compositionally biased toward polar residues: residues 240 to 266, 302 to 314, and 339 to 349; these read VKPTLSVPSVTPSTVAPGVQNYSQESG, ALPSSSLPQTVPP, and DTESTPSSATW. N-linked (GlcNAc...) asparagine glycosylation occurs at Asn260. N-linked (GlcNAc...) asparagine glycosylation is present at Asn394. Residues 500–520 form a helical membrane-spanning segment; sequence LFVVLVIIGVICFIIIVLGLL. The Cytoplasmic segment spans residues 521-603; it reads YNCWQRRMPK…SDVFEEDTHL (83 aa). Over residues 558-570 the composition is skewed to polar residues; the sequence is DSQSEMQEKQPSL. The tract at residues 558–603 is disordered; sequence DSQSEMQEKQPSLNGGAINGPSSWSALMGSKRDPEDSDVFEEDTHL. Phosphoserine is present on residues Ser569 and Ser594. The segment covering 592 to 603 has biased composition (acidic residues); sequence EDSDVFEEDTHL.

It belongs to the podocalyxin family. In terms of assembly, homodimer; disulfide-linked. Interacts with SELL, SELE and SELP. Post-translationally, glycosylated; contains chondroitin sulfate. Displays sialylated O-linked oligosaccharides. In terms of processing, sulfation is necessary for interaction with SELL. Sialylated O-linked oligosaccharides are necessary for interaction with SELL, SELE and SELP.

It localises to the membrane. Functionally, acts as a ligand for vascular selectins. Mediates rapid rolling of leukocytes over vascular surfaces through high affinity divalent cation-dependent interactions with E-, P- and L-selectins. This is Podocalyxin-like protein 2 (Podxl2) from Mus musculus (Mouse).